We begin with the raw amino-acid sequence, 492 residues long: Serine incorporator 4 (492 aa).

Transmembrane regions (helical) follow at residues 58–78 (FYILLHMGASAICCLLLSKTV), 113–133 (AVYRVCAGTATFHLLQAVLLV), 148–168 (SFWSLKLLFLLGLCTAAFCIP), 179–199 (IGICGGFTFILLQLVLITAFA), 217–237 (FLGVLLATLGFYSMAGVGAVL), 254–274 (LLSLHLCFCGLLSLLSIAPCI), 281–301 (SGLLQASIISCYIMYLTFSAL), 330–350 (IPDASVAVFSASIMYACVLFA), 421–441 (GFHFAFFLASLYVMVTLTNWF), and 464–484 (VASCWACVLLYLGLLLAPLLA).

Belongs to the TDE1 family.

The protein resides in the membrane. Its function is as follows. Incorporates a polar amino acid serine into membranes and facilitates the synthesis of two serine-derived lipids, phosphatidylserine and sphingolipids. The protein is Serine incorporator 4 (Serinc4) of Rattus norvegicus (Rat).